A 105-amino-acid chain; its full sequence is uncharacterized protein (105 aa).

Residues 58–105 (YRKKKPNHSRDNPRINSNLSTNYAQAKSVERSRSNSLNSGPNPLENAT) form a disordered region. Polar residues-rich tracts occupy residues 71–82 (RINSNLSTNYAQ) and 91–105 (SNSL…ENAT).

The protein resides in the mitochondrion. This is an uncharacterized protein from Arabidopsis thaliana (Mouse-ear cress).